Consider the following 72-residue polypeptide: MSKDDVIQMAGEVVENLPNAMFRVKLENGHVFLGHISGKMRMHYIRILPGDKVTVEMTPYDLTRARIIFRAK.

The 72-residue stretch at 1-72 folds into the S1-like domain; that stretch reads MSKDDVIQMA…TRARIIFRAK (72 aa).

It belongs to the IF-1 family. Component of the 30S ribosomal translation pre-initiation complex which assembles on the 30S ribosome in the order IF-2 and IF-3, IF-1 and N-formylmethionyl-tRNA(fMet); mRNA recruitment can occur at any time during PIC assembly.

The protein localises to the cytoplasm. One of the essential components for the initiation of protein synthesis. Stabilizes the binding of IF-2 and IF-3 on the 30S subunit to which N-formylmethionyl-tRNA(fMet) subsequently binds. Helps modulate mRNA selection, yielding the 30S pre-initiation complex (PIC). Upon addition of the 50S ribosomal subunit IF-1, IF-2 and IF-3 are released leaving the mature 70S translation initiation complex. This Polynucleobacter asymbioticus (strain DSM 18221 / CIP 109841 / QLW-P1DMWA-1) (Polynucleobacter necessarius subsp. asymbioticus) protein is Translation initiation factor IF-1 1.